The primary structure comprises 292 residues: MSQDVNELSKQPTPDKAEDNAFFPSPYSLSQYTAPKTDFDGVEHKGAYKDGKWKVLMIAAEERYVLLENGKMFSTGNHPVEMLLPLHHLMEAGFDVDVATLSGYPVKLELWAMPTEDEAVISTYNKLKEKLKQPKKLADVIKNELGPDSDYLSVFIPGGHAAVVGISESEDVQQTLDWALDNDRFIVTLCHGPAALLSAGINREKSPLEGYSVCVFPDSLDEGANIEIGYLPGRLKWLVADLLTKQGLKVVNDDMTGRTLKDRKLLTGDSPLASNELGKLAVNEMLNAIQNK.

The segment covering 1–12 (MSQDVNELSKQP) has biased composition (polar residues). Residues 1-23 (MSQDVNELSKQPTPDKAEDNAFF) form a disordered region. The Nucleophile role is filled by cysteine 190.

Belongs to the peptidase C56 family. HchA subfamily.

The protein localises to the cytoplasm. The enzyme catalyses N(omega)-(1-hydroxy-2-oxopropyl)-L-arginyl-[protein] + H2O = lactate + L-arginyl-[protein] + H(+). The catalysed reaction is N(6)-(1-hydroxy-2-oxopropyl)-L-lysyl-[protein] + H2O = lactate + L-lysyl-[protein] + H(+). It catalyses the reaction S-(1-hydroxy-2-oxopropyl)-L-cysteinyl-[protein] + H2O = lactate + L-cysteinyl-[protein] + H(+). It carries out the reaction N(omega)-(1-hydroxy-2-oxoethyl)-L-arginyl-[protein] + H2O = L-arginyl-[protein] + glycolate + H(+). The enzyme catalyses N(6)-(1-hydroxy-2-oxoethyl)-L-lysyl-[protein] + H2O = glycolate + L-lysyl-[protein] + H(+). The catalysed reaction is S-(1-hydroxy-2-oxoethyl)-L-cysteinyl-[protein] + H2O = glycolate + L-cysteinyl-[protein] + H(+). It catalyses the reaction N(2)-(1-hydroxy-2-oxopropyl)-dGTP + H2O = lactate + dGTP + H(+). It carries out the reaction N(2)-(1-hydroxy-2-oxopropyl)-GTP + H2O = lactate + GTP + H(+). The enzyme catalyses N(2)-(1-hydroxy-2-oxopropyl)-GDP + H2O = lactate + GDP + H(+). The catalysed reaction is N(2)-(1-hydroxy-2-oxopropyl)-GMP + H2O = lactate + GMP + H(+). It catalyses the reaction N(2)-(1-hydroxy-2-oxoethyl)-dGTP + H2O = dGTP + glycolate + H(+). It carries out the reaction N(2)-(1-hydroxy-2-oxoethyl)-GTP + H2O = glycolate + GTP + H(+). The enzyme catalyses N(2)-(1-hydroxy-2-oxoethyl)-GDP + H2O = glycolate + GDP + H(+). The catalysed reaction is N(2)-(1-hydroxy-2-oxoethyl)-GMP + H2O = glycolate + GMP + H(+). It catalyses the reaction an N(2)-(1-hydroxy-2-oxopropyl)-guanosine in RNA + H2O = a guanosine in RNA + lactate + H(+). It carries out the reaction an N(2)-(1-hydroxy-2-oxopropyl)-2'-deoxyguanosine in DNA + H2O = a 2'-deoxyguanosine in DNA + lactate + H(+). The enzyme catalyses an N(2)-(1-hydroxy-2-oxoethyl)-guanosine in RNA + H2O = a guanosine in RNA + glycolate + H(+). The catalysed reaction is an N(2)-(1-hydroxy-2-oxoethyl)-2'-deoxyguanosine in DNA + H2O = a 2'-deoxyguanosine in DNA + glycolate + H(+). Its function is as follows. Protein and nucleotide deglycase that catalyzes the deglycation of the Maillard adducts formed between amino groups of proteins or nucleotides and reactive carbonyl groups of glyoxals. Thus, functions as a protein deglycase that repairs methylglyoxal- and glyoxal-glycated proteins, and releases repaired proteins and lactate or glycolate, respectively. Deglycates cysteine, arginine and lysine residues in proteins, and thus reactivates these proteins by reversing glycation by glyoxals. Acts on early glycation intermediates (hemithioacetals and aminocarbinols), preventing the formation of Schiff bases and advanced glycation endproducts (AGE). Also functions as a nucleotide deglycase able to repair glycated guanine in the free nucleotide pool (GTP, GDP, GMP, dGTP) and in DNA and RNA. Is thus involved in a major nucleotide repair system named guanine glycation repair (GG repair), dedicated to reversing methylglyoxal and glyoxal damage via nucleotide sanitization and direct nucleic acid repair. Plays an important role in protecting cells from carbonyl stress. The sequence is that of Protein/nucleic acid deglycase HchA from Staphylococcus aureus (strain Newman).